The primary structure comprises 28 residues: Gamma-conotoxin-like de7a (28 aa).

3 disulfide bridges follow: cysteine 2-cysteine 18, cysteine 9-cysteine 22, and cysteine 17-cysteine 27. Proline 4 carries the post-translational modification 4-hydroxyproline. A 4-carboxyglutamate mark is found at glutamate 13 and glutamate 16. At serine 28 the chain carries Serine amide.

Belongs to the conotoxin O1 superfamily. In terms of tissue distribution, expressed by the venom duct.

It localises to the secreted. Functionally, gamma-conotoxins may act on voltage-gated non-specific cation pacemaker channels (HCN). This Conasprella delessertii (Sozon's cone) protein is Gamma-conotoxin-like de7a.